The following is a 221-amino-acid chain: tRNA (guanine-N(7)-)-methyltransferase (221 aa).

S-adenosyl-L-methionine is bound by residues Glu-46, Asp-71, and Asp-120. Residue Asp-120 is part of the active site. Asp-156 contributes to the substrate binding site.

It belongs to the class I-like SAM-binding methyltransferase superfamily. TrmB family.

The catalysed reaction is guanosine(46) in tRNA + S-adenosyl-L-methionine = N(7)-methylguanosine(46) in tRNA + S-adenosyl-L-homocysteine. It functions in the pathway tRNA modification; N(7)-methylguanine-tRNA biosynthesis. Functionally, catalyzes the formation of N(7)-methylguanine at position 46 (m7G46) in tRNA. The chain is tRNA (guanine-N(7)-)-methyltransferase from Cytophaga hutchinsonii (strain ATCC 33406 / DSM 1761 / CIP 103989 / NBRC 15051 / NCIMB 9469 / D465).